The following is a 73-amino-acid chain: Large ribosomal subunit protein bL31 (73 aa).

It belongs to the bacterial ribosomal protein bL31 family. Type A subfamily. Part of the 50S ribosomal subunit. Contacts protein L9.

Binds the 23S rRNA and interacts with the tRNA in the E site. This is Large ribosomal subunit protein bL31 (rpmE) from Deinococcus radiodurans (strain ATCC 13939 / DSM 20539 / JCM 16871 / CCUG 27074 / LMG 4051 / NBRC 15346 / NCIMB 9279 / VKM B-1422 / R1).